The sequence spans 461 residues: Photosystem II CP43 reaction center protein (461 aa).

A propeptide spanning residues 1–2 (ME) is cleaved from the precursor. Residue threonine 3 is modified to N-acetylthreonine. Phosphothreonine is present on threonine 3. 5 helical membrane-spanning segments follow: residues 57–81 (LFEV…PHLA), 122–143 (LIGP…KDKN), 166–188 (KAMY…RIIT), 243–263 (QPWA…LSYS), and 279–300 (WFNN…ASQS). Glutamate 355 is a [CaMn4O5] cluster binding site. The chain crosses the membrane as a helical span at residues 435 to 459 (RARAAAAGFEKGIDRLTEPVLSLKP).

Belongs to the PsbB/PsbC family. PsbC subfamily. In terms of assembly, PSII is composed of 1 copy each of membrane proteins PsbA, PsbB, PsbC, PsbD, PsbE, PsbF, PsbH, PsbI, PsbJ, PsbK, PsbL, PsbM, PsbT, PsbX, PsbY, PsbZ, Psb30/Ycf12, at least 3 peripheral proteins of the oxygen-evolving complex and a large number of cofactors. It forms dimeric complexes. Binds multiple chlorophylls and provides some of the ligands for the Ca-4Mn-5O cluster of the oxygen-evolving complex. It may also provide a ligand for a Cl- that is required for oxygen evolution. PSII binds additional chlorophylls, carotenoids and specific lipids. serves as cofactor.

It localises to the plastid. Its subcellular location is the chloroplast thylakoid membrane. Its function is as follows. One of the components of the core complex of photosystem II (PSII). It binds chlorophyll and helps catalyze the primary light-induced photochemical processes of PSII. PSII is a light-driven water:plastoquinone oxidoreductase, using light energy to abstract electrons from H(2)O, generating O(2) and a proton gradient subsequently used for ATP formation. This is Photosystem II CP43 reaction center protein from Stigeoclonium helveticum (Green alga).